The primary structure comprises 756 residues: Conserved oligomeric Golgi complex subunit 2 (756 aa).

Residues 62–82 (RSELRSHLASLNRELVDLINR) adopt a coiled-coil conformation. The segment at 173–199 (WQNEDANSMGRSSMNDENSTQQDGTTM) is disordered.

The protein belongs to the COG2 family. As to quaternary structure, homodimer. Component of the conserved oligomeric Golgi complex which is composed of eight different subunits and is required for normal Golgi morphology and localization. Binds to COG3 and COG4. Interacts with FPP3/VETH1 and FPP2/VETH2; this interaction promotes the association between cortical microtubules and EXO70A1. Binds to SEC15B, and, possibly, with EXO70A1, SEC3A and SEC10A.

The protein localises to the golgi apparatus membrane. Its function is as follows. Required for normal Golgi morphology and function. Ensures, when in complex with FPP3/VETH1 and FPP2/VETH2, the correct secondary cell wall (SCW) deposition pattern by recruiting exocyst components to cortical microtubules in xylem cells during secondary cell wall deposition. In Arabidopsis thaliana (Mouse-ear cress), this protein is Conserved oligomeric Golgi complex subunit 2.